Reading from the N-terminus, the 323-residue chain is MYHNSTQKKHWTFLSEDEPLRRRIQANVRYRARIRATEKPRLSEIFSLEPHEELAICKYYEKRLLDFCNAFKPTMPKSVLGTACMYFKRFYLNNSVMEHHPRIIMLTCVFLACKVDEFNVSSIQFVGNLGENPLGQEKILEQILEYELLLIQQLNFHLIVHNPYRPFEGFLIDVKTRYPMLENPEVLRKSADEFLNRVALTDACLLFAPSVIALTAILSTASRAGLNMESYLTECLSLKDNQETMSHLLDGMRRLKILVSKYEPARPEEVAALKKRLDHCHSTEVTLSVHGRKRKGYEDDGYISKKPKTEEDEWTDEDFGDSL.

The disordered stretch occupies residues 296–323 (GYEDDGYISKKPKTEEDEWTDEDFGDSL). The segment covering 310–323 (EEDEWTDEDFGDSL) has biased composition (acidic residues).

This sequence belongs to the cyclin family. Cyclin C subfamily. As to quaternary structure, associates primarily with CDK7 and MAT1 to form the CAK complex. CAK can further associate with the core-TFIIH to form the TFIIH basal transcription factor.

The protein resides in the nucleus. Functionally, regulates CDK7, the catalytic subunit of the CDK-activating kinase (CAK) enzymatic complex. CAK activates the cyclin-associated kinases CDK1, CDK2, CDK4 and CDK6 by threonine phosphorylation. CAK complexed to the core-TFIIH basal transcription factor activates RNA polymerase II by serine phosphorylation of the repetitive C-terminal domain (CTD) of its large subunit (POLR2A), allowing its escape from the promoter and elongation of the transcripts. Involved in cell cycle control and in RNA transcription by RNA polymerase II. Its expression and activity are constant throughout the cell cycle. The chain is Cyclin-H (ccnh) from Xenopus laevis (African clawed frog).